A 249-amino-acid chain; its full sequence is Solute carrier family 25 member 35 (249 aa).

Solcar repeat units lie at residues 1 to 90 (MDFL…AEAG) and 152 to 243 (QSWK…LRMV). The next 4 membrane-spanning stretches (helical) occupy residues 38-58 (TYQRHYRNVFHAFITIGKVDG), 59-79 (LAALQRGLAPALLYQFLMNGI), 154-174 (WKVALAAAMVSGIAVVLAMTP), and 226-249 (LGPHTILSLFFWDQLRMVYYTYTK).

This sequence belongs to the mitochondrial carrier (TC 2.A.29) family.

The protein localises to the mitochondrion inner membrane. The catalysed reaction is a dicarboxylate(in) + sulfate(out) = a dicarboxylate(out) + sulfate(in). Its function is as follows. Putative antiporter that exchanges dicarboxylates and sulfur oxoanions across the inner membrane of mitochondria. The polypeptide is Solute carrier family 25 member 35 (SLC25A35) (Bos taurus (Bovine)).